Reading from the N-terminus, the 395-residue chain is MEMKKSGLGTTAIHAGTLKNLYGTLAMPIYQTSTFIFDSAEQGGRRFALEEAGYIYTRLGNPTTTVLENKIAALEEGEAGIAMSSGMGAISSTLWTVLKAGDHVVTDKTLYGCTFALMNHGLTRFGVEVTFVDTSNLEEVKNAMKKNTRVVYLETPANPNLKIVDLEALSKIAHTNPNTLVIVDNTFATPYMQKPLKLGVDIVVHSATKYLNGHGDVIAGLVVTRQELADQIRFVGLKDMTGAVLGPQEAYYIIRGLKTFEIRMERHCKNARTIVDFLNKHPKVEKVYYPGLETHPGYEIAKKQMKDFGAMISFELKGGFEAGKTLLNNLKLCSLAVSLGDTETLIQHPASMTHSPYTKEEREVAGITDGLVRLSVGLENVEDIIADLEQGLEKI.

Residues tyrosine 56–arginine 58 and glycine 86–methionine 87 contribute to the pyridoxal 5'-phosphate site. Residue tyrosine 111 participates in substrate binding. Residue serine 206–threonine 208 coordinates pyridoxal 5'-phosphate. Lysine 209 is subject to N6-(pyridoxal phosphate)lysine. Arginine 373 provides a ligand contact to substrate.

The protein belongs to the trans-sulfuration enzymes family. L-methionine gamma-lyase subfamily. Homotetramer. It depends on pyridoxal 5'-phosphate as a cofactor.

It carries out the reaction L-methionine + H2O = methanethiol + 2-oxobutanoate + NH4(+). The catalysed reaction is L-homocysteine + H2O = 2-oxobutanoate + hydrogen sulfide + NH4(+) + H(+). It catalyses the reaction L-cysteine + H2O = hydrogen sulfide + pyruvate + NH4(+) + H(+). Its function is as follows. Catalyzes the alpha,gamma-elimination of L-methionine to produce methanethiol, 2-oxobutanoate and ammonia, and that of L-homocysteine. Can also use L-cysteine as substrate, catalyzing its alpha,beta-elimination; this activity seems to only minimally contribute to the production of hydrogen sulfide (H2S) by F.nucleatum in the oral cavity, which is toxic for a large variety of cells in periodontal regions. The chain is L-methionine gamma-lyase from Fusobacterium nucleatum subsp. nucleatum (strain ATCC 25586 / DSM 15643 / BCRC 10681 / CIP 101130 / JCM 8532 / KCTC 2640 / LMG 13131 / VPI 4355).